The chain runs to 352 residues: tRNA N6-adenosine threonylcarbamoyltransferase (352 aa).

The Fe cation site is built by H111 and H115. Substrate is bound by residues 133–137 (LASGG), D166, G179, and N275. D300 is a Fe cation binding site.

It belongs to the KAE1 / TsaD family. Requires Fe(2+) as cofactor.

The protein localises to the cytoplasm. The catalysed reaction is L-threonylcarbamoyladenylate + adenosine(37) in tRNA = N(6)-L-threonylcarbamoyladenosine(37) in tRNA + AMP + H(+). In terms of biological role, required for the formation of a threonylcarbamoyl group on adenosine at position 37 (t(6)A37) in tRNAs that read codons beginning with adenine. Is involved in the transfer of the threonylcarbamoyl moiety of threonylcarbamoyl-AMP (TC-AMP) to the N6 group of A37, together with TsaE and TsaB. TsaD likely plays a direct catalytic role in this reaction. This Treponema pallidum (strain Nichols) protein is tRNA N6-adenosine threonylcarbamoyltransferase.